Consider the following 309-residue polypeptide: Beta-ketoacyl-[acyl-carrier-protein] synthase III (309 aa).

Catalysis depends on residues Cys111 and His236. Residues 237-241 (QANVR) are ACP-binding. Asn266 is a catalytic residue.

This sequence belongs to the thiolase-like superfamily. FabH family. Homodimer.

Its subcellular location is the cytoplasm. It catalyses the reaction malonyl-[ACP] + acetyl-CoA + H(+) = 3-oxobutanoyl-[ACP] + CO2 + CoA. It functions in the pathway lipid metabolism; fatty acid biosynthesis. Catalyzes the condensation reaction of fatty acid synthesis by the addition to an acyl acceptor of two carbons from malonyl-ACP. Catalyzes the first condensation reaction which initiates fatty acid synthesis and may therefore play a role in governing the total rate of fatty acid production. Possesses both acetoacetyl-ACP synthase and acetyl transacylase activities. Its substrate specificity determines the biosynthesis of branched-chain and/or straight-chain of fatty acids. This is Beta-ketoacyl-[acyl-carrier-protein] synthase III from Aquifex aeolicus (strain VF5).